We begin with the raw amino-acid sequence, 396 residues long: Elongation factor Tu (396 aa).

Residues 10–206 enclose the tr-type G domain; sequence KPHCNIGTIG…AVDEFIPQPT (197 aa). A G1 region spans residues 19 to 26; it reads GHVDHGKT. GTP is bound at residue 19–26; sequence GHVDHGKT. T26 is a binding site for Mg(2+). The tract at residues 60-64 is G2; it reads GITIS. The tract at residues 81 to 84 is G3; sequence DCPG. GTP-binding positions include 81-85 and 136-139; these read DCPGH and NKVD. Residues 136–139 form a G4 region; sequence NKVD. The G5 stretch occupies residues 174–176; that stretch reads SAL.

This sequence belongs to the TRAFAC class translation factor GTPase superfamily. Classic translation factor GTPase family. EF-Tu/EF-1A subfamily. As to quaternary structure, monomer.

Its subcellular location is the cytoplasm. The enzyme catalyses GTP + H2O = GDP + phosphate + H(+). In terms of biological role, GTP hydrolase that promotes the GTP-dependent binding of aminoacyl-tRNA to the A-site of ribosomes during protein biosynthesis. The polypeptide is Elongation factor Tu (Pelagibacter ubique (strain HTCC1062)).